The chain runs to 79 residues: uncharacterized protein (79 aa).

The protein belongs to the UPF0440 family.

This is an uncharacterized protein from Methanocella arvoryzae (strain DSM 22066 / NBRC 105507 / MRE50).